We begin with the raw amino-acid sequence, 90 residues long: Probable Fe(2+)-trafficking protein (90 aa).

This sequence belongs to the Fe(2+)-trafficking protein family.

Its function is as follows. Could be a mediator in iron transactions between iron acquisition and iron-requiring processes, such as synthesis and/or repair of Fe-S clusters in biosynthetic enzymes. This Bordetella avium (strain 197N) protein is Probable Fe(2+)-trafficking protein.